A 102-amino-acid chain; its full sequence is Small ribosomal subunit protein uS10 (102 aa).

Residues 33-59 are disordered; it reads RMSGPIPLPTKRIRITTRKSPDGEGSA.

The protein belongs to the universal ribosomal protein uS10 family. As to quaternary structure, part of the 30S ribosomal subunit.

Its function is as follows. Involved in the binding of tRNA to the ribosomes. This chain is Small ribosomal subunit protein uS10, found in Pyrococcus furiosus (strain ATCC 43587 / DSM 3638 / JCM 8422 / Vc1).